Reading from the N-terminus, the 325-residue chain is Helicase VP6-A (325 aa).

Disordered regions lie at residues 1–126 (MLLA…TNGR) and 175–231 (GVAE…PARI). 4 stretches are compositionally biased toward basic and acidic residues: residues 8-18 (VIKRSSEELKQ), 32-54 (EGGKEDKTEPKEESKAEGSKDGE), 61-79 (GQKEEGGKETKDADVDRRI), and 92-105 (PGERANENADRGDG). ATP is bound at residue K106. The segment covering 106 to 122 (KVGGGGGDADAGVGATG) has biased composition (gly residues). Residues 175–229 (GVAEQTERLRDLRRKEKNGTHAKAVERGGRKQRKESHGDAQREGVEEEKTSEEPA) show a composition bias toward basic and acidic residues.

This sequence belongs to the orbivirus VP6 family. As to quaternary structure, homohexamer.

The protein localises to the virion. The catalysed reaction is ATP + H2O = ADP + phosphate + H(+). Functionally, ATP dependent RNA helicase essential for RNA packaging and viral transcription. Possesses ss- and dsRNA-binding capacity. The chain is Helicase VP6-A (Segment-9) from Bluetongue virus 11 (isolate USA) (BTV 11).